Reading from the N-terminus, the 329-residue chain is Vanillate O-demethylase oxygenase subunit (329 aa).

Positions 1–84 (MICNERMVIY…AQERHGFIWV (84 aa)) constitute a Rieske domain. 4 residues coordinate [2Fe-2S] cluster: C24, H26, C43, and H46.

Belongs to the bacterial ring-hydroxylating dioxygenase alpha subunit family. This demethylase system consists of two proteins: an oxygenase and an oxygenase reductase. The cofactor is [2Fe-2S] cluster. Fe cation is required as a cofactor.

It carries out the reaction vanillate + NADH + O2 + H(+) = 3,4-dihydroxybenzoate + formaldehyde + NAD(+) + H2O. It participates in xenobiotic degradation; vanillyl-alcohol degradation. This chain is Vanillate O-demethylase oxygenase subunit (vanA), found in Pseudomonas sp. (strain ATCC 19151).